The chain runs to 376 residues: Chanoclavine-I aldehyde reductase easA (376 aa).

FMN-binding positions include 29–31 (PTT), A64, Q106, and H173. Residues H173 and N176 each contribute to the substrate site. The Proton donor role is filled by Y178. FMN is bound by residues K225, G297, 323-324 (GR), and R324. Y351 lines the substrate pocket.

It belongs to the NADH:flavin oxidoreductase/NADH oxidase family. It depends on FMN as a cofactor.

The enzyme catalyses dihydrochanoclavine-I aldehyde + NADP(+) = chanoclavine-I aldehyde + NADPH + H(+). The protein operates within alkaloid biosynthesis; ergot alkaloid biosynthesis. Functionally, aldehyde reductase; part of the gene cluster that mediates the biosynthesis of fumiclavanine C, a fungal ergot alkaloid. DmaW catalyzes the first step of ergot alkaloid biosynthesis by condensing dimethylallyl diphosphate (DMAP) and tryptophan to form 4-dimethylallyl-L-tryptophan. The second step is catalyzed by the methyltransferase easF that methylates 4-dimethylallyl-L-tryptophan in the presence of S-adenosyl-L-methionine, resulting in the formation of 4-dimethylallyl-L-abrine. The catalase easC and the FAD-dependent oxidoreductase easE then transform 4-dimethylallyl-L-abrine to chanoclavine-I which is further oxidized by EasD in the presence of NAD(+), resulting in the formation of chanoclavine-I aldehyde. EasA reduces chanoclavine-I aldehyde to dihydrochanoclavine-I aldehyde that spontaneously dehydrates to form 6,8-dimethyl-6,7-didehydroergoline. EasG then catalyzes the reduction of 6,8-dimethyl-6,7-didehydroergoline to form festuclavine. Hydrolysis of festuclavine by easM then leads to the formation of fumigaclavine B which is in turn acetylated by easN to fumigaclavine A. Finally, easL catalyzes the conversion of fumigaclavine A into fumigaclavine C by attaching a dimethylallyl moiety to C-2 of the indole nucleus. The sequence is that of Chanoclavine-I aldehyde reductase easA from Aspergillus fumigatus (strain ATCC MYA-4609 / CBS 101355 / FGSC A1100 / Af293) (Neosartorya fumigata).